A 260-amino-acid polypeptide reads, in one-letter code: uncharacterized protein (260 aa).

Residues 8–166 (LALGSGGARG…VDRIPVSVVK (159 aa)) enclose the PNPLA domain. The GXSXG signature appears at 39 to 43 (GSSMG). Catalysis depends on S41, which acts as the Nucleophile. D153 serves as the catalytic Proton acceptor. Positions 153–155 (DGA) match the DGA/G motif.

Belongs to the NTE family.

This is an uncharacterized protein from Bacillus subtilis (strain 168).